Consider the following 416-residue polypeptide: MISAKEVEDAYDLLKAVVTKTPLQLDPYLSNKYQANIYLKEENLQKVRSFKLRGAYYSISKLSDEQRSKGVVCASAGNHAQGVAFAANQLNISATIFMPVTTPNQKISQVKFFGESHVTIRLIGDTFDESARAAKAFSQDNDKPFIDPFDDENVIAGQGTVALEIFAQAKKQGISLDKIFVQIGGGGLIAGITAYSKERYPQTEIIGVEAKGATSMKAAYSAGQPVTLEHIDKFADGIAVATVGQKTYQLINDKVKQLLAVDEGLISQTILELYSKLGIVAEPAGATSVAALELIKDEIKGKNIVCIISGGNNDISRMQEIEERALVYEGLKHYFVINFPQRPGALRTFVSDILGPNDDITRFEYIKRADKGKGPCLVGILLSDASDYDSLIDRIERFDNRYVNLHGNDSLYELLV.

Residue Lys51 is modified to N6-(pyridoxal phosphate)lysine. Pyridoxal 5'-phosphate is bound by residues Asn78, 184-188 (GGGGL), and Ser309. Residues 333–407 (HYFVINFPQR…FDNRYVNLHG (75 aa)) form the ACT-like domain.

The protein belongs to the serine/threonine dehydratase family. Homotetramer. Pyridoxal 5'-phosphate is required as a cofactor.

It carries out the reaction L-threonine = 2-oxobutanoate + NH4(+). The protein operates within amino-acid biosynthesis; L-isoleucine biosynthesis; 2-oxobutanoate from L-threonine: step 1/1. Functionally, catalyzes the anaerobic formation of alpha-ketobutyrate and ammonia from threonine in a two-step reaction. The first step involved a dehydration of threonine and a production of enamine intermediates (aminocrotonate), which tautomerizes to its imine form (iminobutyrate). Both intermediates are unstable and short-lived. The second step is the nonenzymatic hydrolysis of the enamine/imine intermediates to form 2-ketobutyrate and free ammonia. In the low water environment of the cell, the second step is accelerated by RidA. This chain is L-threonine dehydratase biosynthetic IlvA (ilvA), found in Lactococcus lactis subsp. lactis (strain IL1403) (Streptococcus lactis).